Reading from the N-terminus, the 876-residue chain is Aspartate--tRNA(Asp/Asn) ligase (876 aa).

Positions 1-278 are unknown; the sequence is MAATDTPWRP…FGFKRAYEGF (278 aa). Positions 279–876 are aspartyl-tRNA synthetase; it reads MHVYRSHTCG…PKPKKEVKEG (598 aa). Residue E453 coordinates L-aspartate. Positions 477–480 are aspartate; sequence QQFK. Residues R499 and H729 each coordinate L-aspartate. 499–501 is an ATP binding site; the sequence is RDE. An ATP-binding site is contributed by E763. R770 contributes to the L-aspartate binding site. Residue 815–818 participates in ATP binding; that stretch reads GVDR.

It belongs to the class-II aminoacyl-tRNA synthetase family. Type 1 subfamily. Homodimer.

The protein resides in the cytoplasm. It catalyses the reaction tRNA(Asx) + L-aspartate + ATP = L-aspartyl-tRNA(Asx) + AMP + diphosphate. In terms of biological role, aspartyl-tRNA synthetase with relaxed tRNA specificity since it is able to aspartylate not only its cognate tRNA(Asp) but also tRNA(Asn). Reaction proceeds in two steps: L-aspartate is first activated by ATP to form Asp-AMP and then transferred to the acceptor end of tRNA(Asp/Asn). In Paramagnetospirillum magneticum (strain ATCC 700264 / AMB-1) (Magnetospirillum magneticum), this protein is Aspartate--tRNA(Asp/Asn) ligase (aspS).